Reading from the N-terminus, the 4391-residue chain is Basement membrane-specific heparan sulfate proteoglycan core protein (4391 aa).

The N-terminal stretch at 1–21 (MGWRAAGALLLALLLHGRLLA) is a signal peptide. Thr42 carries an O-linked (GalNAc...) threonine glycan. Ser65, Ser71, and Ser76 each carry an O-linked (Xyl...) (heparan sulfate) serine glycan. One can recognise an SEA domain in the interval 80–191 (QMVYFRALVN…QGFQFRRLGT (112 aa)). An N-linked (GlcNAc...) asparagine glycan is attached at Asn89. LDL-receptor class A domains are found at residues 198-235 (ACTEAEFACHSYNECVALEYRCDRRPDCRDMSDELNCE), 284-320 (PCGPQEAACRNGHCIPRDYLCDGQEDCEDGSDELDCG), 324-360 (PCEPNEFPCGNGHCALKLWRCDGDFDCEDRTDEANCP), and 367-404 (VCGPTQFRCVSTNMCIPASFHCDEESDCPDRSDEFGCM). 12 disulfides stabilise this stretch: Cys199–Cys212, Cys206–Cys225, Cys219–Cys234, Cys285–Cys297, Cys292–Cys310, Cys304–Cys319, Cys325–Cys337, Cys332–Cys350, Cys344–Cys359, Cys368–Cys381, Cys375–Cys394, and Cys388–Cys403. Positions 405-504 (PPQVVTPPRE…VLELVPQRGP (100 aa)) constitute an Ig-like C2-type 1 domain. Residues 521-530 (CFCFGITSVC) enclose the Laminin EGF-like 1; first part domain. Residues 538-730 (DQIRLRFDQP…SHGRAHSVEE (193 aa)) form the Laminin IV type A 1 domain. Asn554 is a glycosylation site (N-linked (GlcNAc...) asparagine). Residues 731–763 (CRCPIGYSGLSCESCDAHFTRVPGGPYLGTCSG) enclose the Laminin EGF-like 1; second part domain. Disulfide bonds link Cys764-Cys773, Cys766-Cys780, Cys783-Cys792, Cys795-Cys811, Cys814-Cys829, Cys816-Cys839, Cys842-Cys851, Cys854-Cys869, Cys879-Cys892, Cys894-Cys903, and Cys906-Cys921. Laminin EGF-like domains follow at residues 764–813 (CNCN…SCRP) and 814–871 (CPCP…KCRP). Residues 879–923 (CDERGSMGTSGEACRCKNNVVGRLCNECADGSFHLSTRNPDGCLK) form the Laminin EGF-like 4; truncated domain. One can recognise a Laminin EGF-like 5; first part domain in the interval 924-933 (CFCMGVSRHC). The region spanning 941–1125 (AQLHGASEEP…GQDPALEVEQ (185 aa)) is the Laminin IV type A 2 domain. Residues 1126–1158 (CSCPPGYRGPSCQDCDTGYTRTPSGLYLGTCER) form the Laminin EGF-like 5; second part domain. 12 cysteine pairs are disulfide-bonded: Cys1159–Cys1168, Cys1161–Cys1175, Cys1178–Cys1187, Cys1190–Cys1206, Cys1209–Cys1224, Cys1211–Cys1234, Cys1237–Cys1246, Cys1249–Cys1263, Cys1275–Cys1287, Cys1277–Cys1293, Cys1295–Cys1304, and Cys1307–Cys1322. 3 Laminin EGF-like domains span residues 1159–1208 (CSCH…DCQL), 1209–1265 (CPCY…PCQR), and 1275–1324 (CNCD…GCLP). Residues 1325–1334 (CFCMGITQQC) form the Laminin EGF-like 9; first part domain. Residues 1344–1529 (ISTHFAPGDF…NRPRALEVEE (186 aa)) form the Laminin IV type A 3 domain. In terms of domain architecture, Laminin EGF-like 9; second part spans 1530–1562 (CRCPPGYIGLSCQDCAPGYTRTGSGLYLGHCEL). 8 cysteine pairs are disulfide-bonded: Cys1563-Cys1572, Cys1565-Cys1579, Cys1582-Cys1591, Cys1594-Cys1610, Cys1613-Cys1628, Cys1615-Cys1638, Cys1641-Cys1650, and Cys1653-Cys1668. 2 consecutive Laminin EGF-like domains span residues 1563–1612 (CECN…DCQP) and 1613–1670 (CACP…QCLP). Ig-like C2-type domains follow at residues 1677-1771 (LVVE…SKPI), 1772-1865 (TVTV…TLSA), 1866-1955 (PVVS…GGGG), 1956-2051 (PRVQ…ASPP), 2052-2151 (PVKI…PGST), 2152-2244 (RPIR…PGPI), 2245-2340 (PPVR…AGST), 2341-2436 (QPIR…LGVT), 2437-2533 (PTVR…QGVA), 2534-2629 (YPVR…PSVS), 2630-2726 (PPIR…PGSS), 2727-2826 (MPIR…PGGA), 2827-2924 (PPIR…PGLA), 2925-3021 (QPIY…RLRS), 3022-3112 (PVIS…HGPP), 3113-3211 (TVSV…APGA), 3212-3298 (PQVQ…VESP), 3299-3399 (PYAT…AGST), 3400-3488 (PTVQ…ALPS), 3489-3574 (VLIN…LVQA), and 3575-3662 (LPQI…PERV). N-linked (GlcNAc...) asparagine glycosylation is present at Asn1755. The N-linked (GlcNAc...) asparagine glycan is linked to Asn2121. The segment at 2994–3014 (ASGPGPEQEASFTVTVPPSEG) is disordered. An O-linked (Xyl...) (chondroitin sulfate) serine glycan is attached at Ser2995. Over residues 3003–3014 (ASFTVTVPPSEG) the composition is skewed to polar residues. N-linked (GlcNAc...) asparagine glycosylation is found at Asn3072 and Asn3105. The N-linked (GlcNAc...) asparagine glycan is linked to Asn3279. Residues 3663-3843 (VPYFTQTPYS…DLNLTAHGIS (181 aa)) form the Laminin G-like 1 domain. Asn3780 and Asn3836 each carry an N-linked (GlcNAc...) asparagine glycan. 7 cysteine pairs are disulfide-bonded: Cys3819–Cys3845, Cys3848–Cys3859, Cys3853–Cys3869, Cys3871–Cys3880, Cys3888–Cys3899, Cys3893–Cys3910, and Cys3912–Cys3921. EGF-like domains lie at 3844–3881 (HCPTCRDRPCQNGGQCHDSESSSYVCVCPAGFTGSRCE) and 3884–3922 (QALHCHPEACGPDATCVNRPDGRGYTCRCHLGRSGLRCE). Residues 3928–4103 (TTPSLSGAGS…LGSQGIGQCY (176 aa)) form the Laminin G-like 2 domain. Ser3933 carries an O-linked (Xyl...) (chondroitin sulfate) serine glycan. Asn4068 carries an N-linked (GlcNAc...) asparagine glycan. Intrachain disulfides connect Cys4076/Cys4102, Cys4108/Cys4119, Cys4113/Cys4129, Cys4131/Cys4140, Cys4147/Cys4159, Cys4153/Cys4164, and Cys4166/Cys4175. EGF-like domains are found at residues 4104–4141 (DSSPCERQPCQHGATCMPAGEYEFQCLCRDGFKGDLCE) and 4143–4176 (EENPCQLREPCLHGGTCQGTRCLCLPGFSGPRCQ). The segment at 4149-4151 (LRE) is mediates motor neuron attachment. Residues Ser4179 and Ser4193 are each glycosylated (O-linked (Xyl...) (chondroitin sulfate) serine). The region spanning 4201 to 4389 (QYGAYFHDDG…AQAGANTRPC (189 aa)) is the Laminin G-like 3 domain. 2 residues coordinate Ca(2+): Asp4258 and Leu4275. The tract at residues 4299–4301 (LRE) is mediates motor neuron attachment. Ca(2+) contacts are provided by Ala4325 and Asn4327. Cysteines 4355 and 4389 form a disulfide. The tract at residues 4364 to 4391 (ARPGAPPPQPLDLQHRAQAGANTRPCPS) is disordered.

As to quaternary structure, has a strong tendency to aggregate in dimers or stellate structures. Interacts with other basement membrane components such as laminin, prolargin and collagen type IV. Interacts with COL13A1. Interacts with FGFBP1. Interacts with VWA1. Interacts (via C-terminus) with ECM1 (via C-terminus). Interacts with SVEP1. Post-translationally, proteolytic processing produces the C-terminal angiogenic peptide, endorepellin. This peptide can be further processed to produce the LG3 peptide. O-glycosylated with core 1 or possibly core 8 glycans. Contains three heparan sulfate chains. Also contains chondroitin sulfate. In terms of tissue distribution, detected in cerebrospinal fluid, fibroblasts and urine (at protein level).

The protein resides in the secreted. The protein localises to the extracellular space. Its subcellular location is the extracellular matrix. It localises to the basement membrane. Its function is as follows. Integral component of basement membranes. Component of the glomerular basement membrane (GBM), responsible for the fixed negative electrostatic membrane charge, and which provides a barrier which is both size- and charge-selective. It serves as an attachment substrate for cells. Plays essential roles in vascularization. Critical for normal heart development and for regulating the vascular response to injury. Also required for avascular cartilage development. Anti-angiogenic and anti-tumor peptide that inhibits endothelial cell migration, collagen-induced endothelial tube morphogenesis and blood vessel growth in the chorioallantoic membrane. Blocks endothelial cell adhesion to fibronectin and type I collagen. Anti-tumor agent in neovascularization. Interaction with its ligand, integrin alpha2/beta1, is required for the anti-angiogenic properties. Evokes a reduction in phosphorylation of receptor tyrosine kinases via alpha2/beta1 integrin-mediated activation of the tyrosine phosphatase, PTPN6. Functionally, has anti-angiogenic properties that require binding of calcium ions for full activity. The protein is Basement membrane-specific heparan sulfate proteoglycan core protein (HSPG2) of Homo sapiens (Human).